Reading from the N-terminus, the 93-residue chain is Small ribosomal subunit protein uS19 (93 aa).

Residues Gly-72–Lys-93 form a disordered region. The span at Tyr-80–Lys-93 shows a compositional bias: basic residues.

The protein belongs to the universal ribosomal protein uS19 family.

In terms of biological role, protein S19 forms a complex with S13 that binds strongly to the 16S ribosomal RNA. This Aster yellows witches'-broom phytoplasma (strain AYWB) protein is Small ribosomal subunit protein uS19.